Reading from the N-terminus, the 382-residue chain is Alkanesulfonate monooxygenase (382 aa).

It belongs to the SsuD family.

It catalyses the reaction an alkanesulfonate + FMNH2 + O2 = an aldehyde + FMN + sulfite + H2O + 2 H(+). In terms of biological role, catalyzes the desulfonation of aliphatic sulfonates. In Pseudomonas putida (strain ATCC 700007 / DSM 6899 / JCM 31910 / BCRC 17059 / LMG 24140 / F1), this protein is Alkanesulfonate monooxygenase.